Here is a 123-residue protein sequence, read N- to C-terminus: Thioredoxin domain-containing protein 17 (123 aa).

Ala2 bears the N-acetylalanine mark. Residues 41-123 (SWCPDCVQAE…NLVEMLFSED (83 aa)) form the Thioredoxin domain. Active-site nucleophile residues include Cys43 and Cys46. The cysteines at positions 43 and 46 are disulfide-linked.

The protein belongs to the thioredoxin family. Interacts with TRXR1 and DYNLL1/DNCL1. The oxidized protein is reduced by TRXR1. As to expression, ubiquitously expressed in cell lines.

The protein localises to the cytoplasm. Its function is as follows. Disulfide reductase. May participate in various redox reactions through the reversible oxidation of its active center dithiol to a disulfide and catalyze dithiol-disulfide exchange reactions. Modulates TNF-alpha signaling and NF-kappa-B activation. Has peroxidase activity and may contribute to the elimination of cellular hydrogen peroxide. The polypeptide is Thioredoxin domain-containing protein 17 (TXNDC17) (Homo sapiens (Human)).